The sequence spans 571 residues: Glutamate--tRNA ligase (571 aa).

The 'HIGH' region motif lies at 110–120 (PNPNGPATLGS).

This sequence belongs to the class-I aminoacyl-tRNA synthetase family. Glutamate--tRNA ligase type 2 subfamily.

It localises to the cytoplasm. The catalysed reaction is tRNA(Glu) + L-glutamate + ATP = L-glutamyl-tRNA(Glu) + AMP + diphosphate. Its function is as follows. Catalyzes the attachment of glutamate to tRNA(Glu) in a two-step reaction: glutamate is first activated by ATP to form Glu-AMP and then transferred to the acceptor end of tRNA(Glu). The sequence is that of Glutamate--tRNA ligase from Methanosarcina barkeri (strain Fusaro / DSM 804).